A 346-amino-acid polypeptide reads, in one-letter code: Protein RecA (346 aa).

An ATP-binding site is contributed by 67–74 (GPESSGKT).

It belongs to the RecA family.

Its subcellular location is the cytoplasm. In terms of biological role, can catalyze the hydrolysis of ATP in the presence of single-stranded DNA, the ATP-dependent uptake of single-stranded DNA by duplex DNA, and the ATP-dependent hybridization of homologous single-stranded DNAs. It interacts with LexA causing its activation and leading to its autocatalytic cleavage. The chain is Protein RecA from Mycobacteroides abscessus (strain ATCC 19977 / DSM 44196 / CCUG 20993 / CIP 104536 / JCM 13569 / NCTC 13031 / TMC 1543 / L948) (Mycobacterium abscessus).